The following is a 147-amino-acid chain: Thyrotropin subunit beta (147 aa).

Positions 1-20 (MRVVLLASGVLCLLAGQVLS) are cleaved as a signal peptide. Intrachain disulfides connect C22–C72, C36–C87, C39–C126, C47–C103, C51–C105, and C108–C115. N-linked (GlcNAc...) asparagine glycosylation occurs at N43.

It belongs to the glycoprotein hormones subunit beta family. In terms of assembly, heterodimer of a common alpha chain and a unique beta chain which confers biological specificity to thyrotropin, lutropin, follitropin and gonadotropin.

The protein localises to the secreted. Functionally, indispensable for the control of thyroid structure and metabolism. May play some role in the biological processes of the immature fishes. In Anguilla japonica (Japanese eel), this protein is Thyrotropin subunit beta (tshb).